A 132-amino-acid chain; its full sequence is MRRRRYLEKLEWVEREINFATEHAMSDEVRKRAVLYSIMTAVEVVMDIVAMLVKDLGKQVEDDYTNISKLLEECVIEESEAELLRRYNGLRNAIAHHYNHLDLSKVERALTQLDELYEVAVKLVKTADKLAG.

Active-site residues include arginine 91 and histidine 96. Residues arginine 91–tyrosine 98 carry the RX(4)HXY motif motif. O-di-AMP-tyrosine is present on tyrosine 98.

The protein belongs to the HepT RNase toxin family. As to quaternary structure, homodimer, probably forms a complex with cognate antitoxin AF_0948. Post-translationally, modified by cognate antitoxin AF_0948; probably at least 2 successive AMPylation events occur on Tyr-98.

Its function is as follows. Probable toxic component of a putative type VII toxin-antitoxin (TA) system, probably an RNase. Probably neutralized by cognate antitoxin AF_0948. Neutralization may be due to AMPylation by AF_0948. This Archaeoglobus fulgidus (strain ATCC 49558 / DSM 4304 / JCM 9628 / NBRC 100126 / VC-16) protein is Putative RNase AF_0947.